Reading from the N-terminus, the 442-residue chain is Protein ABSCISIC ACID-INSENSITIVE 5 (442 aa).

Positions methionine 1–glutamate 15 are enriched in basic and acidic residues. The segment at methionine 1–leucine 37 is disordered. Phosphoserine is present on residues serine 42 and serine 64. 3 disordered regions span residues asparagine 83 to proline 151, isoleucine 164 to threonine 201, and arginine 218 to serine 238. The segment covering asparagine 99–asparagine 109 has biased composition (low complexity). Gly residues predominate over residues glycine 110 to arginine 123. The span at asparagine 136–leucine 146 shows a compositional bias: polar residues. Serine 145 is subject to Phosphoserine. Residues glycine 167–serine 176 show a composition bias toward gly residues. Positions asparagine 177–glycine 193 are enriched in low complexity. Threonine 201 is modified (phosphothreonine). The region spanning valine 355–serine 418 is the bZIP domain. The interval arginine 357–lysine 376 is basic motif. The segment at leucine 383–leucine 404 is leucine-zipper. Residue lysine 391 forms a Glycyl lysine isopeptide (Lys-Gly) (interchain with G-Cter in SUMO) linkage. Residues glutamate 414 to leucine 442 are disordered.

It belongs to the bZIP family. ABI5 subfamily. In terms of assembly, DNA-binding homodimer. DNA-binding heterodimer with AREB3/DPBF3 or EEL/DPBF4. Interacts with ABI3, KEG, the mediator subunit MED25, and the AFP proteins AFP1, AFP2, AFP3 and AFP4. Interacts with TAP46. Interacts with the 36 kDa catalytic subunit (subunit C) of PP2A. Interacts with FYPP1 and FYPP3. Interacts with FREE1 (via C-terminus). Phosphorylated by SRK2D and SRK2I in vitro. Post-translationally, ubiquitinated. AFP1, KEG and RPN10 mediate its proteasome-dependent degradation. Its stability or degradation plays a central role in abscisic acid response. Sumoylated at Lys-391 by SIZ1. Sumoylation protects ABI5 from proteasome degradation, attenuating ABA signaling and sensitivity to ABA. As to expression, predominantly expressed in seeds.

It is found in the nucleus. Its function is as follows. Participates in ABA-regulated gene expression during seed development and subsequent vegetative stage by acting as the major mediator of ABA repression of growth. Binds to the embryo specification element and the ABA-responsive element (ABRE) of the Dc3 gene promoter and to the ABRE of the Em1 and Em6 genes promoters. Can also trans-activate its own promoter, suggesting that it is autoregulated. Plays a role in sugar-mediated senescence. The chain is Protein ABSCISIC ACID-INSENSITIVE 5 (ABI5) from Arabidopsis thaliana (Mouse-ear cress).